Here is a 256-residue protein sequence, read N- to C-terminus: Pimeloyl-[acyl-carrier protein] methyl ester esterase (256 aa).

The region spanning 15-242 (HLVLLHGWGL…AAHAPFISHP (228 aa)) is the AB hydrolase-1 domain. Substrate contacts are provided by residues W22, 82–83 (SL), and 143–147 (FLALQ). Residue S82 is the Nucleophile of the active site. Residues D207 and H235 contribute to the active site. Residue H235 participates in substrate binding.

The protein belongs to the AB hydrolase superfamily. Carboxylesterase BioH family. As to quaternary structure, monomer.

Its subcellular location is the cytoplasm. The enzyme catalyses 6-carboxyhexanoyl-[ACP] methyl ester + H2O = 6-carboxyhexanoyl-[ACP] + methanol + H(+). It participates in cofactor biosynthesis; biotin biosynthesis. The physiological role of BioH is to remove the methyl group introduced by BioC when the pimeloyl moiety is complete. It allows to synthesize pimeloyl-ACP via the fatty acid synthetic pathway through the hydrolysis of the ester bonds of pimeloyl-ACP esters. The sequence is that of Pimeloyl-[acyl-carrier protein] methyl ester esterase from Escherichia fergusonii (strain ATCC 35469 / DSM 13698 / CCUG 18766 / IAM 14443 / JCM 21226 / LMG 7866 / NBRC 102419 / NCTC 12128 / CDC 0568-73).